A 531-amino-acid chain; its full sequence is Probable mitochondrial-processing peptidase subunit beta, mitochondrial (531 aa).

The N-terminal 78 residues, 1 to 78 (MAMKNLLSLA…ENPDKRFLKY (78 aa)), are a transit peptide targeting the mitochondrion. Residues 30-50 (SAIDSVPASASPTALSPPPPH) are disordered. Position 141 (His-141) interacts with Zn(2+). Glu-144 (proton acceptor) is an active-site residue. His-145 contacts Zn(2+). The active site involves Glu-214. Residue Glu-221 coordinates Zn(2+).

The protein belongs to the peptidase M16 family. Heterodimer of an alpha subunit and a beta subunit subunits, forming the mitochondrial processing protease (MPP) in which the alpha subunit is involved in substrate recognition and binding and the beta subunit is the catalytic subunit. Component of the ubiquinol-cytochrome c oxidoreductase (cytochrome b-c1 complex, complex III, CIII), a multisubunit enzyme composed of 10 subunits. The complex is composed of 3 respiratory subunits cytochrome b (MT-CYB), cytochrome c1 (CYC1-1 or CYC1-2) and Rieske protein (UCR1-1 or UCR1-2), 2 core protein subunits MPPalpha1 (or MPPalpha2) and MPPB, and 5 low-molecular weight protein subunits QCR7-1 (or QCR7-2), UCRQ-1 (or UCRQ-2), QCR9, UCRY and probably QCR6-1 (or QCR6-2). The complex exists as an obligatory dimer and forms supercomplexes (SCs) in the inner mitochondrial membrane with NADH-ubiquinone oxidoreductase (complex I, CI), resulting in different assemblies (supercomplexes SCI(1)III(2) and SCI(2)III(4)). It depends on Zn(2+) as a cofactor.

The protein localises to the mitochondrion. It is found in the mitochondrion inner membrane. The enzyme catalyses Release of N-terminal transit peptides from precursor proteins imported into the mitochondrion, typically with Arg in position P2.. Binding to the alpha subunit is required for catalytic activity. In terms of biological role, catalytic subunit of the essential mitochondrial processing protease (MPP), which cleaves the mitochondrial sequence off newly imported precursors proteins. Preferentially, cleaves after an arginine at position P2. Functionally, component of the ubiquinol-cytochrome c oxidoreductase, a multisubunit transmembrane complex that is part of the mitochondrial electron transport chain which drives oxidative phosphorylation. The respiratory chain contains 3 multisubunit complexes succinate dehydrogenase (complex II, CII), ubiquinol-cytochrome c oxidoreductase (cytochrome b-c1 complex, complex III, CIII) and cytochrome c oxidase (complex IV, CIV), that cooperate to transfer electrons derived from NADH and succinate to molecular oxygen, creating an electrochemical gradient over the inner membrane that drives transmembrane transport and the ATP synthase. The cytochrome b-c1 complex catalyzes electron transfer from ubiquinol to cytochrome c, linking this redox reaction to translocation of protons across the mitochondrial inner membrane, with protons being carried across the membrane as hydrogens on the quinol. In the process called Q cycle, 2 protons are consumed from the matrix, 4 protons are released into the intermembrane space and 2 electrons are passed to cytochrome c. The protein is Probable mitochondrial-processing peptidase subunit beta, mitochondrial (MPPbeta) of Arabidopsis thaliana (Mouse-ear cress).